Consider the following 44-residue polypeptide: FKIISFLSTIFLGFFIISTTIYSIYMGFGPMSRKLKDPFEEHEN.

Residues 3–23 (IISFLSTIFLGFFIISTTIYS) traverse the membrane as a helical segment.

It belongs to the PsbN family.

The protein resides in the plastid. The protein localises to the chloroplast thylakoid membrane. Functionally, may play a role in photosystem I and II biogenesis. The protein is Putative protein PsbN of Euglena gracilis.